A 129-amino-acid polypeptide reads, in one-letter code: uncharacterized protein (129 aa).

The segment covering 84–98 has biased composition (basic residues); the sequence is QKTVSKKYKSRKGRR. The segment at 84–129 is disordered; that stretch reads QKTVSKKYKSRKGRRYTRERNISSEKNKTDKSHKVRVGKIQNINND. Residues 99-115 are compositionally biased toward basic and acidic residues; it reads YTRERNISSEKNKTDKS.

This is an uncharacterized protein from Acanthamoeba polyphaga mimivirus (APMV).